The chain runs to 178 residues: Large ribosomal subunit protein uL30 (178 aa).

This sequence belongs to the universal ribosomal protein uL30 family. Part of the 50S ribosomal subunit.

The chain is Large ribosomal subunit protein uL30 from Pyrobaculum aerophilum (strain ATCC 51768 / DSM 7523 / JCM 9630 / CIP 104966 / NBRC 100827 / IM2).